Reading from the N-terminus, the 234-residue chain is uncharacterized protein (234 aa).

The region spanning 103-211 (LAKKVPFVVC…SHIKIGKSFL (109 aa)) is the tRNA-binding domain.

This is an uncharacterized protein from Mycoplasma pneumoniae (strain ATCC 29342 / M129 / Subtype 1) (Mycoplasmoides pneumoniae).